Here is a 120-residue protein sequence, read N- to C-terminus: Glycophorin-A (120 aa).

Gln1 bears the Pyrrolidone carboxylic acid mark. Residues 1 to 40 are disordered; it reads QTIATGSPPIAGTSDLSTITSAATPTFTTEQDGREQGDGL. Residues Thr2 and Thr5 are each glycosylated (O-linked (GalNAc...) threonine). Ser7 is a glycosylation site (O-linked (GalNAc...) serine). The O-linked (GalNAc...) threonine glycan is linked to Thr13. A glycan (O-linked (GalNAc...) serine) is linked at Ser17. Low complexity predominate over residues 17 to 29; sequence STITSAATPTFTT. O-linked (GalNAc...) threonine glycosylation is found at Thr18 and Thr20. O-linked (GalNAc...) serine glycosylation is present at Ser21. O-linked (GalNAc...) threonine glycosylation is found at Thr24 and Thr28. The helical transmembrane segment at 50–72 threads the bilayer; it reads VITVIILGVMAGIIGIILLLAYV. The segment at 78 to 120 is disordered; it reads KRPPADVPPPASTVPSADAPPPVSEDDETSLTSVETDYPGDSQ. Pro residues predominate over residues 82-100; that stretch reads ADVPPPASTVPSADAPPPV. Positions 107–120 are enriched in polar residues; sequence SLTSVETDYPGDSQ. Ser119 is modified (phosphoserine).

It belongs to the glycophorin-A family. Homodimer.

Its subcellular location is the membrane. In terms of biological role, glycophorin A is the major intrinsic membrane sialoglycoprotein of the erythrocyte. Appears to be important for the function of SLC4A1 and is required for high activity of SLC4A1. May be involved in translocation of SLC4A1 to the plasma membrane. The polypeptide is Glycophorin-A (Equus caballus (Horse)).